The following is a 640-amino-acid chain: MPIITLPNGDQKSFDQPVSVMQVAQSIGPGLAKNTVAGRVNDRLVDACDLITEDATLQIITPKDPEGVEIIRHSCAHLVGHAVKQLFPDVQMVIGPVIEEGFYYDIFSPKPFTLDDMAAIEARMKQLIDQDYDVVKKMTPREQVIQEFTTRGETYKLRLIDDMPEETQMGLYYHQEYVDMCRGPHVPNTKFLKNFKLTKISGAYWRGDAKNEQLQRIYGTAWSDKKELAAYIKRIEEAEKRDHRKIGKALDLFHMQEEAPGMVFWHANGWTIYQALEQYMRKVQQDNGYQEVRTPQIVDFTLWEKSGHAANYAENMFTTHSESRNYAVKPMNCPCHVQVFNQGLKSYRDLPVRLAEFGSCHRNEPSGSLHGIMRVRGFTQDDGHIFCTKEQIGKEVADFIQLTLDVYKDFGFEDVQMKLSTRPEKRVGDDRLWDLAEKSLADALDAAGLEWELQPGEGAFYGPKIEFSLKDCLGRVWQCGTIQCDFNLPIRLDASFVTEDNERDQPVMLHRAILGSFERFIGILIEHYAGFMPPWLAPVQACVMNITDSQAEACQQVVAKLKENGLRAISDLRNEKIGFKIRERTLERIPYLLVLGDREVEEGTVNVRTRSGKNLGTMSIDAFVDLVKSAVAERGRYIVE.

The TGS domain occupies 1–61 (MPIITLPNGD…TEDATLQIIT (61 aa)). The segment at 242-533 (DHRKIGKALD…LIEHYAGFMP (292 aa)) is catalytic. Cysteine 333, histidine 384, and histidine 510 together coordinate Zn(2+).

It belongs to the class-II aminoacyl-tRNA synthetase family. In terms of assembly, homodimer. Zn(2+) serves as cofactor.

It is found in the cytoplasm. The enzyme catalyses tRNA(Thr) + L-threonine + ATP = L-threonyl-tRNA(Thr) + AMP + diphosphate + H(+). In terms of biological role, catalyzes the attachment of threonine to tRNA(Thr) in a two-step reaction: L-threonine is first activated by ATP to form Thr-AMP and then transferred to the acceptor end of tRNA(Thr). Also edits incorrectly charged L-seryl-tRNA(Thr). The protein is Threonine--tRNA ligase of Acinetobacter baylyi (strain ATCC 33305 / BD413 / ADP1).